The sequence spans 436 residues: 3-ketoacyl-CoA thiolase (436 aa).

C99 functions as the Acyl-thioester intermediate in the catalytic mechanism. Catalysis depends on proton acceptor residues H392 and C422.

It belongs to the thiolase-like superfamily. Thiolase family. As to quaternary structure, heterotetramer of two alpha chains (FadJ) and two beta chains (FadI).

It localises to the cytoplasm. It carries out the reaction an acyl-CoA + acetyl-CoA = a 3-oxoacyl-CoA + CoA. Its pathway is lipid metabolism; fatty acid beta-oxidation. Functionally, catalyzes the final step of fatty acid oxidation in which acetyl-CoA is released and the CoA ester of a fatty acid two carbons shorter is formed. The protein is 3-ketoacyl-CoA thiolase of Salmonella newport (strain SL254).